Reading from the N-terminus, the 444-residue chain is Methylenetetrahydrofolate--tRNA-(uracil-5-)-methyltransferase TrmFO (444 aa).

10–15 lines the FAD pocket; that stretch reads GAGLAG.

The protein belongs to the MnmG family. TrmFO subfamily. It depends on FAD as a cofactor.

Its subcellular location is the cytoplasm. It carries out the reaction uridine(54) in tRNA + (6R)-5,10-methylene-5,6,7,8-tetrahydrofolate + NADH + H(+) = 5-methyluridine(54) in tRNA + (6S)-5,6,7,8-tetrahydrofolate + NAD(+). It catalyses the reaction uridine(54) in tRNA + (6R)-5,10-methylene-5,6,7,8-tetrahydrofolate + NADPH + H(+) = 5-methyluridine(54) in tRNA + (6S)-5,6,7,8-tetrahydrofolate + NADP(+). Its function is as follows. Catalyzes the folate-dependent formation of 5-methyl-uridine at position 54 (M-5-U54) in all tRNAs. The polypeptide is Methylenetetrahydrofolate--tRNA-(uracil-5-)-methyltransferase TrmFO (Streptococcus agalactiae serotype III (strain NEM316)).